A 367-amino-acid polypeptide reads, in one-letter code: Small ribosomal subunit protein uS2 (367 aa).

The disordered stretch occupies residues 1–68; sequence MPKKAEAKTG…NSTPSTGSKF (68 aa). Basic and acidic residues predominate over residues 21-40; the sequence is AKKDVKAEVNETNKTAEKVS. A compositionally biased stretch (low complexity) spans 53–66; it reads TNESSSNSTPSTGS.

It belongs to the universal ribosomal protein uS2 family.

This chain is Small ribosomal subunit protein uS2, found in Malacoplasma penetrans (strain HF-2) (Mycoplasma penetrans).